The chain runs to 1222 residues: BOS complex subunit NOMO3 (1222 aa).

Residues 1 to 31 form the signal peptide; sequence MLVGQGAGPLGPAVVTAAVVLLLSGVGPAHG. The Extracellular segment spans residues 32–1155; it reads SEDIVVGCGG…NPTRKLPEQD (1124 aa). 3 N-linked (GlcNAc...) asparagine glycosylation sites follow: Asn50, Asn218, and Asn618. A helical membrane pass occupies residues 1156 to 1176; sequence IAQGSYIALPLTLLVLLAGYN. The Cytoplasmic portion of the chain corresponds to 1177–1222; sequence HDKLIPLLLQLTSRLQGVGALGQAASDNSGPEDAKRQAKKQKTRRT. The disordered stretch occupies residues 1198–1222; that stretch reads GQAASDNSGPEDAKRQAKKQKTRRT. Positions 1213–1222 are enriched in basic residues; sequence QAKKQKTRRT.

As to quaternary structure, component of the back of Sec61 (BOS) complex, composed of NCLN/Nicalin, NOMO (NOMO1, NOMO2 or NOMO3) and TMEM147. The BOS complex is part of the multi-pass translocon (MPT) complex, composed of three subcomplexes, the GEL complex (composed of RAB5IF/OPTI and TMCO1), the BOS complex (composed of NCLN/Nicalin, NOMO and TMEM147) and the PAT complex (composed of WDR83OS/Asterix and CCDC47). The MPT complex associates with the SEC61 complex. Due to the strong similarity between NOMO1, NOMO2 and NOMO3, similar interaction pattern probably occur for the three gene copies.

The protein localises to the endoplasmic reticulum membrane. Functionally, component of the multi-pass translocon (MPT) complex that mediates insertion of multi-pass membrane proteins into the lipid bilayer of membranes. The MPT complex takes over after the SEC61 complex: following membrane insertion of the first few transmembrane segments of proteins by the SEC61 complex, the MPT complex occludes the lateral gate of the SEC61 complex to promote insertion of subsequent transmembrane regions. In Homo sapiens (Human), this protein is BOS complex subunit NOMO3 (NOMO3).